The following is a 509-amino-acid chain: ATP synthase subunit alpha (509 aa).

169–176 (GDRQTGKT) is a binding site for ATP.

It belongs to the ATPase alpha/beta chains family. In terms of assembly, F-type ATPases have 2 components, CF(1) - the catalytic core - and CF(0) - the membrane proton channel. CF(1) has five subunits: alpha(3), beta(3), gamma(1), delta(1), epsilon(1). CF(0) has three main subunits: a(1), b(2) and c(9-12). The alpha and beta chains form an alternating ring which encloses part of the gamma chain. CF(1) is attached to CF(0) by a central stalk formed by the gamma and epsilon chains, while a peripheral stalk is formed by the delta and b chains.

It localises to the cell inner membrane. The catalysed reaction is ATP + H2O + 4 H(+)(in) = ADP + phosphate + 5 H(+)(out). Produces ATP from ADP in the presence of a proton gradient across the membrane. The alpha chain is a regulatory subunit. The polypeptide is ATP synthase subunit alpha (Sinorhizobium fredii (strain NBRC 101917 / NGR234)).